Reading from the N-terminus, the 944-residue chain is Spindle pole body component 110 (944 aa).

The residue at position 18 (threonine 18) is a Phosphothreonine. The tract at residues 23 to 110 (IKSKRNTTQT…RKRNLIDDLK (88 aa)) is disordered. Residues 28–46 (NTTQTQVVSPTKVPNANNG) are compositionally biased toward polar residues. A Nuclear localization signal motif is present at residues 54–59 (KKRQRR). The residue at position 60 (serine 60) is a Phosphoserine; by MPS1. 2 positions are modified to phosphothreonine; by MPS1: threonine 64 and threonine 68. A compositionally biased stretch (polar residues) spans 67–78 (STRLFSEASQFD). Serine 80 bears the Phosphoserine mark. The span at 96 to 110 (NVDKSRKRNLIDDLK) shows a compositional bias: basic and acidic residues. A coiled-coil region spans residues 164-791 (EIKSLKHEIK…NRRLEERLIL (628 aa)). A Phosphoserine modification is found at serine 529. 2 consecutive short sequence motifs (nuclear localization signal) follow at residues 726–731 (KEKYKR) and 742–747 (RLRREK). The interval 900 to 927 (SFKTVALLVLACVRMKRIAFYRRSDDNR) is calmodulin-binding.

The protein belongs to the SPC110 family. Homodimer. Component of the SPC110 complex containing at least CMD1, SPC29 and SCP110. Interacts with SPC97 and SPC98.

The protein resides in the nucleus. It is found in the cytoplasm. It localises to the cytoskeleton. The protein localises to the microtubule organizing center. Its subcellular location is the spindle pole body. Component of the spindle pole body (SPB) required for the proper execution of spindle pole body (SPB) duplication. Potential role in cross-linking filaments or anchoring other molecules. It is essential for growth. The chain is Spindle pole body component 110 (SPC110) from Saccharomyces cerevisiae (strain ATCC 204508 / S288c) (Baker's yeast).